The chain runs to 563 residues: Minor fimbrium subunit Mfa1 (563 aa).

The N-terminal stretch at Met1 to Ser19 is a signal peptide. Cys20 carries the N-palmitoyl cysteine lipid modification. Cys20 is lipidated: S-diacylglycerol cysteine. The propeptide occupies Cys20–Arg49. Residues Leu504 to Thr543 are disordered. Pro residues predominate over residues Val505–Pro537.

This sequence belongs to the bacteroidetes fimbrillin superfamily. As to quaternary structure, structural component of the fimbrial stalk. Minor fimbriae are composed of a structural subunit, most often Mfa1, and the accessory subunits Mfa3, Mfa4 and Mfa5. Mfa1 interacts with Mfa2; this anchors the fimbrium in the membrane. Fimbrium assembly occurs by linear, head-to-tail oligomerization of fimbrial subunits. This is mediated via insertion of a C-terminal beta-strand from one subunit into a groove in the N-terminal domain of the following subunit. Interacts with S.gordonii ssp5.

It is found in the fimbrium. It localises to the cell outer membrane. Functionally, structural subunit of the minor fimbriae. These filamentous pili are attached to the cell surface; they mediate biofilm formation, adhesion onto host cells and onto other bacteria that are part of the oral microbiome. They play an important role in invasion of periodontal tissues and are recognized as major virulence factors. Mfa1 orthologs from different strains have highly divergent sequences, and this correlates with pathogenicity. In Porphyromonas gingivalis (strain ATCC 33277 / DSM 20709 / CIP 103683 / JCM 12257 / NCTC 11834 / 2561), this protein is Minor fimbrium subunit Mfa1.